The following is a 65-amino-acid chain: Large ribosomal subunit protein bL33m (65 aa).

The protein belongs to the bacterial ribosomal protein bL33 family. As to quaternary structure, component of the mitochondrial ribosome large subunit (39S) which comprises a 16S rRNA and about 50 distinct proteins.

It localises to the mitochondrion. This is Large ribosomal subunit protein bL33m (mRpL33) from Anopheles gambiae (African malaria mosquito).